A 499-amino-acid polypeptide reads, in one-letter code: Glycerol kinase (499 aa).

Thr13 provides a ligand contact to ADP. 3 residues coordinate ATP: Thr13, Thr14, and Ser15. Thr13 serves as a coordination point for sn-glycerol 3-phosphate. Residue Arg17 coordinates ADP. Sn-glycerol 3-phosphate contacts are provided by Arg83, Glu84, Tyr135, and Asp244. Glycerol is bound by residues Arg83, Glu84, Tyr135, Asp244, and Gln245. Thr266 and Gly309 together coordinate ADP. ATP is bound by residues Thr266, Gly309, Gln313, and Gly410. ADP-binding residues include Gly410 and Asn414.

This sequence belongs to the FGGY kinase family.

The enzyme catalyses glycerol + ATP = sn-glycerol 3-phosphate + ADP + H(+). It functions in the pathway polyol metabolism; glycerol degradation via glycerol kinase pathway; sn-glycerol 3-phosphate from glycerol: step 1/1. With respect to regulation, inhibited by fructose 1,6-bisphosphate (FBP). Functionally, key enzyme in the regulation of glycerol uptake and metabolism. Catalyzes the phosphorylation of glycerol to yield sn-glycerol 3-phosphate. This chain is Glycerol kinase, found in Paraburkholderia xenovorans (strain LB400).